A 259-amino-acid polypeptide reads, in one-letter code: Phosphatidylglycerol--prolipoprotein diacylglyceryl transferase (259 aa).

Transmembrane regions (helical) follow at residues 12-32 (LAIH…VYLA), 41-61 (ISSD…IVGA), 80-100 (IIAI…GALV), and 109-129 (VLNP…AQAI). Residue Arg-131 participates in a 1,2-diacyl-sn-glycero-3-phospho-(1'-sn-glycerol) binding. A run of 3 helical transmembrane segments spans residues 167-187 (IPTF…IMMW), 194-214 (LLDG…RLVI), and 226-246 (GIRI…IFVI).

The protein belongs to the Lgt family.

It localises to the cell membrane. It carries out the reaction L-cysteinyl-[prolipoprotein] + a 1,2-diacyl-sn-glycero-3-phospho-(1'-sn-glycerol) = an S-1,2-diacyl-sn-glyceryl-L-cysteinyl-[prolipoprotein] + sn-glycerol 1-phosphate + H(+). Its pathway is protein modification; lipoprotein biosynthesis (diacylglyceryl transfer). In terms of biological role, catalyzes the transfer of the diacylglyceryl group from phosphatidylglycerol to the sulfhydryl group of the N-terminal cysteine of a prolipoprotein, the first step in the formation of mature lipoproteins. The chain is Phosphatidylglycerol--prolipoprotein diacylglyceryl transferase from Streptococcus pyogenes serotype M3 (strain ATCC BAA-595 / MGAS315).